The following is a 205-amino-acid chain: Glycerol-3-phosphate acyltransferase (205 aa).

A run of 5 helical transmembrane segments spans residues 6–26 (STVLFAIGAYLIGSISFAVVV), 55–75 (KAAILTLLGDGAKGFVAVWLV), 89–109 (VALVAIAVFLGHLWPIFFRFV), 120–140 (ILLALNGWLGLATLITWLVIA), and 162–182 (ALMFGPDAILLAVVAMSVLLI).

This sequence belongs to the PlsY family. Probably interacts with PlsX.

The protein resides in the cell inner membrane. The catalysed reaction is an acyl phosphate + sn-glycerol 3-phosphate = a 1-acyl-sn-glycero-3-phosphate + phosphate. It participates in lipid metabolism; phospholipid metabolism. Catalyzes the transfer of an acyl group from acyl-phosphate (acyl-PO(4)) to glycerol-3-phosphate (G3P) to form lysophosphatidic acid (LPA). This enzyme utilizes acyl-phosphate as fatty acyl donor, but not acyl-CoA or acyl-ACP. This Herminiimonas arsenicoxydans protein is Glycerol-3-phosphate acyltransferase.